We begin with the raw amino-acid sequence, 352 residues long: Protein RecA (352 aa).

ATP is bound at residue 65-72; that stretch reads GPESSGKT. The interval 332–352 is disordered; sequence EEVEKADVKKDAKKDAAEALK. Positions 333–352 are enriched in basic and acidic residues; sequence EVEKADVKKDAKKDAAEALK.

It belongs to the RecA family.

It is found in the cytoplasm. Its function is as follows. Can catalyze the hydrolysis of ATP in the presence of single-stranded DNA, the ATP-dependent uptake of single-stranded DNA by duplex DNA, and the ATP-dependent hybridization of homologous single-stranded DNAs. It interacts with LexA causing its activation and leading to its autocatalytic cleavage. The protein is Protein RecA of Photobacterium profundum (strain SS9).